A 185-amino-acid polypeptide reads, in one-letter code: Threonylcarbamoyl-AMP synthase (185 aa).

The region spanning 5–185 is the YrdC-like domain; it reads NWRVRLAARI…RDGRTGQRLR (181 aa).

It belongs to the SUA5 family. TsaC subfamily.

The protein localises to the cytoplasm. It catalyses the reaction L-threonine + hydrogencarbonate + ATP = L-threonylcarbamoyladenylate + diphosphate + H2O. In terms of biological role, required for the formation of a threonylcarbamoyl group on adenosine at position 37 (t(6)A37) in tRNAs that read codons beginning with adenine. Catalyzes the conversion of L-threonine, HCO(3)(-)/CO(2) and ATP to give threonylcarbamoyl-AMP (TC-AMP) as the acyladenylate intermediate, with the release of diphosphate. This Nitrosococcus oceani (strain ATCC 19707 / BCRC 17464 / JCM 30415 / NCIMB 11848 / C-107) protein is Threonylcarbamoyl-AMP synthase.